Here is a 156-residue protein sequence, read N- to C-terminus: 6,7-dimethyl-8-ribityllumazine synthase (156 aa).

Residues F23, 57–59 (AYE), and 81–83 (AVI) contribute to the 5-amino-6-(D-ribitylamino)uracil site. A (2S)-2-hydroxy-3-oxobutyl phosphate-binding site is contributed by 86–87 (ST). H89 (proton donor) is an active-site residue. Residue F114 participates in 5-amino-6-(D-ribitylamino)uracil binding. R128 provides a ligand contact to (2S)-2-hydroxy-3-oxobutyl phosphate.

This sequence belongs to the DMRL synthase family.

It catalyses the reaction (2S)-2-hydroxy-3-oxobutyl phosphate + 5-amino-6-(D-ribitylamino)uracil = 6,7-dimethyl-8-(1-D-ribityl)lumazine + phosphate + 2 H2O + H(+). Its pathway is cofactor biosynthesis; riboflavin biosynthesis; riboflavin from 2-hydroxy-3-oxobutyl phosphate and 5-amino-6-(D-ribitylamino)uracil: step 1/2. In terms of biological role, catalyzes the formation of 6,7-dimethyl-8-ribityllumazine by condensation of 5-amino-6-(D-ribitylamino)uracil with 3,4-dihydroxy-2-butanone 4-phosphate. This is the penultimate step in the biosynthesis of riboflavin. This is 6,7-dimethyl-8-ribityllumazine synthase from Helicobacter hepaticus (strain ATCC 51449 / 3B1).